The following is a 56-amino-acid chain: uncharacterized protein (56 aa).

This is an uncharacterized protein from Escherichia coli (strain K12).